The chain runs to 368 residues: MVTGWHRPTWIEIDRAAIRENIKNEQNKLPENVDLWAVVKANAYGHGIIEVARTAKEAGAKGFCVAILDEALALREAGFQDDFILVLGATRKEDANLAAKNHISLTVFREDWLEDLTLEAPLRIHLKVDSGMGRLGIRTTDEARRIETTIAKDNQLQLEGIYTHFATADQLETSYFEQQLAKFQTILTSLKNRPTYVHTANSAASLLQPQIGFDAIRFGISMYGLTPSTEIKTSLPFELKPALALYTEMVHVKELAPGDSVSYGATYTATEREWVATLPIGYADGLIRHYSGFHVLVDGELAPIIGRVCMDQTIIKLPREFQTGSKVTIIGTDHGNTITADDAAHYLDTINYEVTCLLNERIPRKYIH.

Lys-40 serves as the catalytic Proton acceptor; specific for D-alanine. At Lys-40 the chain carries N6-(pyridoxal phosphate)lysine. Arg-134 provides a ligand contact to substrate. Residue Tyr-263 is the Proton acceptor; specific for L-alanine of the active site. Met-310 contacts substrate.

This sequence belongs to the alanine racemase family. Pyridoxal 5'-phosphate is required as a cofactor.

The enzyme catalyses L-alanine = D-alanine. It participates in amino-acid biosynthesis; D-alanine biosynthesis; D-alanine from L-alanine: step 1/1. Catalyzes the interconversion of L-alanine and D-alanine. May also act on other amino acids. This Listeria monocytogenes serotype 4b (strain CLIP80459) protein is Alanine racemase (alr).